A 474-amino-acid polypeptide reads, in one-letter code: Glutamate--tRNA ligase (474 aa).

The short motif at proline 10–glycine 20 is the 'HIGH' region element. 4 residues coordinate Zn(2+): cysteine 107, cysteine 109, cysteine 134, and aspartate 136. The 'KMSKS' region motif lies at arginine 244–arginine 248. Lysine 247 serves as a coordination point for ATP.

The protein belongs to the class-I aminoacyl-tRNA synthetase family. Glutamate--tRNA ligase type 1 subfamily. Monomer. Requires Zn(2+) as cofactor.

The protein localises to the cytoplasm. It carries out the reaction tRNA(Glu) + L-glutamate + ATP = L-glutamyl-tRNA(Glu) + AMP + diphosphate. Functionally, catalyzes the attachment of glutamate to tRNA(Glu) in a two-step reaction: glutamate is first activated by ATP to form Glu-AMP and then transferred to the acceptor end of tRNA(Glu). The chain is Glutamate--tRNA ligase from Anaeromyxobacter sp. (strain K).